A 269-amino-acid polypeptide reads, in one-letter code: Tryptophan synthase alpha chain (269 aa).

Active-site proton acceptor residues include E56 and D67.

The protein belongs to the TrpA family. Tetramer of two alpha and two beta chains.

It catalyses the reaction (1S,2R)-1-C-(indol-3-yl)glycerol 3-phosphate + L-serine = D-glyceraldehyde 3-phosphate + L-tryptophan + H2O. It functions in the pathway amino-acid biosynthesis; L-tryptophan biosynthesis; L-tryptophan from chorismate: step 5/5. Its function is as follows. The alpha subunit is responsible for the aldol cleavage of indoleglycerol phosphate to indole and glyceraldehyde 3-phosphate. The chain is Tryptophan synthase alpha chain from Mycobacterium ulcerans (strain Agy99).